The sequence spans 386 residues: Methionyl-tRNA formyltransferase, mitochondrial (386 aa).

This sequence belongs to the Fmt family.

Its subcellular location is the mitochondrion. It catalyses the reaction L-methionyl-tRNA(fMet) + (6R)-10-formyltetrahydrofolate = N-formyl-L-methionyl-tRNA(fMet) + (6S)-5,6,7,8-tetrahydrofolate + H(+). Its function is as follows. Methionyl-tRNA formyltransferase that formylates methionyl-tRNA in mitochondria and is crucial for translation initiation. This is Methionyl-tRNA formyltransferase, mitochondrial (Mtfmt) from Mus musculus (Mouse).